Consider the following 526-residue polypeptide: ATP synthase subunit alpha (526 aa).

ATP is bound at residue 171–178 (GDRQTGKT).

The protein belongs to the ATPase alpha/beta chains family. In terms of assembly, F-type ATPases have 2 components, CF(1) - the catalytic core - and CF(0) - the membrane proton channel. CF(1) has five subunits: alpha(3), beta(3), gamma(1), delta(1), epsilon(1). CF(0) has four main subunits: a(1), b(1), b'(1) and c(9-12).

It localises to the cell inner membrane. The catalysed reaction is ATP + H2O + 4 H(+)(in) = ADP + phosphate + 5 H(+)(out). In terms of biological role, produces ATP from ADP in the presence of a proton gradient across the membrane. The alpha chain is a regulatory subunit. The chain is ATP synthase subunit alpha from Chlorobium phaeovibrioides (strain DSM 265 / 1930) (Prosthecochloris vibrioformis (strain DSM 265)).